The chain runs to 301 residues: Protoheme IX farnesyltransferase 2 (301 aa).

9 consecutive transmembrane segments (helical) span residues 29–49 (VVALMLLTVLVGMCLAVPTAV), 51–71 (VQPLIAGMFGIALMAGSAAAL), 101–121 (ALIFAASIGGLGFVVLYVLVN), 123–143 (LTAWLTFASLIGYALVYTAYL), 150–170 (NIVIGGLAGAMPPLLGWTAVT), 177–197 (ALLLVIIIFTWTPPHFWALAI), 223–243 (CILLYTVLLAIACLLPVLVGM), 244–264 (CGPMYFVCSSLLSSVFIYKAW), and 281–301 (FSIYHLMLLFMALLIDHYLWS).

Belongs to the UbiA prenyltransferase family. Protoheme IX farnesyltransferase subfamily.

It is found in the cell inner membrane. It carries out the reaction heme b + (2E,6E)-farnesyl diphosphate + H2O = Fe(II)-heme o + diphosphate. It participates in porphyrin-containing compound metabolism; heme O biosynthesis; heme O from protoheme: step 1/1. Functionally, converts heme B (protoheme IX) to heme O by substitution of the vinyl group on carbon 2 of heme B porphyrin ring with a hydroxyethyl farnesyl side group. This chain is Protoheme IX farnesyltransferase 2, found in Shewanella sp. (strain W3-18-1).